The following is a 443-amino-acid chain: 3-phosphoshikimate 1-carboxyvinyltransferase (443 aa).

Residues Lys-25, Ser-26, and Arg-30 each coordinate 3-phosphoshikimate. Lys-25 is a phosphoenolpyruvate binding site. 2 residues coordinate phosphoenolpyruvate: Gly-117 and Arg-145. Residues Ser-188, Ser-189, Gln-190, Ser-217, Glu-331, and His-358 each contribute to the 3-phosphoshikimate site. Gln-190 contacts phosphoenolpyruvate. Catalysis depends on Glu-331, which acts as the Proton acceptor. Phosphoenolpyruvate-binding residues include Arg-362, Arg-404, and Lys-428.

The protein belongs to the EPSP synthase family. In terms of assembly, monomer.

The protein resides in the cytoplasm. The enzyme catalyses 3-phosphoshikimate + phosphoenolpyruvate = 5-O-(1-carboxyvinyl)-3-phosphoshikimate + phosphate. It functions in the pathway metabolic intermediate biosynthesis; chorismate biosynthesis; chorismate from D-erythrose 4-phosphate and phosphoenolpyruvate: step 6/7. Functionally, catalyzes the transfer of the enolpyruvyl moiety of phosphoenolpyruvate (PEP) to the 5-hydroxyl of shikimate-3-phosphate (S3P) to produce enolpyruvyl shikimate-3-phosphate and inorganic phosphate. This Tropheryma whipplei (strain TW08/27) (Whipple's bacillus) protein is 3-phosphoshikimate 1-carboxyvinyltransferase.